The following is a 932-amino-acid chain: Protocadherin gamma-A2 (932 aa).

An N-terminal signal peptide occupies residues 1 to 28 (MAALQKLPHCRKLVLLCFLLATLWEARA). 6 Cadherin domains span residues 29–133 (GQIR…APRF), 134–242 (GVEE…APVF), 243–347 (TQPE…APEF), 348–452 (YMTS…APAF), 453–562 (SRTS…APEI), and 570–682 (DGST…EPSA). Residues 29-692 (GQIRYSVREE…IPNDSDLTLY (664 aa)) are Extracellular-facing. Residues asparagine 419 and asparagine 545 are each glycosylated (N-linked (GlcNAc...) asparagine). A glycan (N-linked (GlcNAc...) asparagine) is linked at asparagine 685. The chain crosses the membrane as a helical span at residues 693-713 (LVVAVAAVSCVFLAFVIVLLA). Topologically, residues 714 to 932 (HRLRRWHKSR…KKKSGKKEKK (219 aa)) are cytoplasmic. Disordered regions lie at residues 798–841 (LEEE…WPNN) and 902–932 (ATLT…KEKK). Residues 806–841 (FSQQAPPNTDWRFSQAQRPGTSGSQNGDDTGTWPNN) show a composition bias toward polar residues. A compositionally biased stretch (basic residues) spans 922–932 (NKKKSGKKEKK).

It localises to the cell membrane. In terms of biological role, potential calcium-dependent cell-adhesion protein. May be involved in the establishment and maintenance of specific neuronal connections in the brain. This Homo sapiens (Human) protein is Protocadherin gamma-A2 (PCDHGA2).